We begin with the raw amino-acid sequence, 466 residues long: Ribulose bisphosphate carboxylase large chain (466 aa).

Lysine 5 is modified (N6,N6,N6-trimethyllysine). Substrate-binding residues include asparagine 114 and threonine 164. Lysine 166 (proton acceptor) is an active-site residue. Substrate is bound at residue lysine 168. The Mg(2+) site is built by lysine 192, aspartate 194, and glutamate 195. Lysine 192 is subject to N6-carboxylysine. Residue histidine 285 is the Proton acceptor of the active site. Arginine 286, histidine 318, and serine 370 together coordinate substrate.

This sequence belongs to the RuBisCO large chain family. Type I subfamily. Heterohexadecamer of 8 large chains and 8 small chains; disulfide-linked. The disulfide link is formed within the large subunit homodimers. The cofactor is Mg(2+). In terms of processing, the disulfide bond which can form in the large chain dimeric partners within the hexadecamer appears to be associated with oxidative stress and protein turnover.

It localises to the plastid. The protein localises to the chloroplast. It catalyses the reaction 2 (2R)-3-phosphoglycerate + 2 H(+) = D-ribulose 1,5-bisphosphate + CO2 + H2O. The enzyme catalyses D-ribulose 1,5-bisphosphate + O2 = 2-phosphoglycolate + (2R)-3-phosphoglycerate + 2 H(+). In terms of biological role, ruBisCO catalyzes two reactions: the carboxylation of D-ribulose 1,5-bisphosphate, the primary event in carbon dioxide fixation, as well as the oxidative fragmentation of the pentose substrate in the photorespiration process. Both reactions occur simultaneously and in competition at the same active site. In Betula nigra (River birch), this protein is Ribulose bisphosphate carboxylase large chain.